The primary structure comprises 140 residues: Transcription antitermination protein NusB (140 aa).

Belongs to the NusB family.

In terms of biological role, involved in transcription antitermination. Required for transcription of ribosomal RNA (rRNA) genes. Binds specifically to the boxA antiterminator sequence of the ribosomal RNA (rrn) operons. This chain is Transcription antitermination protein NusB, found in Pseudothermotoga lettingae (strain ATCC BAA-301 / DSM 14385 / NBRC 107922 / TMO) (Thermotoga lettingae).